A 708-amino-acid polypeptide reads, in one-letter code: Serine/threonine-protein kinase Nek5 (708 aa).

One can recognise a Protein kinase domain in the interval 4-259 (YDVIKAIGQG…INSILKRPFL (256 aa)). ATP contacts are provided by residues 10-18 (IGQGAFGKA) and lysine 33. Residue aspartate 128 is the Proton acceptor of the active site. Disordered stretches follow at residues 376–403 (SYHPIPQENTGVEDYGQETRHGPSPSQW) and 423–454 (KQLGLRPSSAEPNYNQRQELRSNGEEPRFQEL). Residues 440–454 (QELRSNGEEPRFQEL) show a composition bias toward basic and acidic residues.

This sequence belongs to the protein kinase superfamily. NEK Ser/Thr protein kinase family. NIMA subfamily. It depends on Mg(2+) as a cofactor.

It is found in the cell projection. The protein resides in the cilium. Its subcellular location is the flagellum. It catalyses the reaction L-seryl-[protein] + ATP = O-phospho-L-seryl-[protein] + ADP + H(+). The catalysed reaction is L-threonyl-[protein] + ATP = O-phospho-L-threonyl-[protein] + ADP + H(+). This chain is Serine/threonine-protein kinase Nek5 (NEK5), found in Homo sapiens (Human).